Consider the following 150-residue polypeptide: Cytochrome c oxidase subunit 5A, mitochondrial (150 aa).

Residues 1–41 (MLGAALRRCAVAATTWAGPRGHLHSARTPGPAAAIQSVRCY) constitute a mitochondrion transit peptide. The short motif at 2 to 17 (LGAALRRCAVAATTWA) is the SIFI-degron element. An N6-acetyllysine mark is found at lysine 87 and lysine 113. Threonine 141 carries the post-translational modification Phosphothreonine.

It belongs to the cytochrome c oxidase subunit 5A family. Component of the cytochrome c oxidase (complex IV, CIV), a multisubunit enzyme composed of 14 subunits. The complex is composed of a catalytic core of 3 subunits MT-CO1, MT-CO2 and MT-CO3, encoded in the mitochondrial DNA, and 11 supernumerary subunits COX4I, COX5A, COX5B, COX6A, COX6B, COX6C, COX7A, COX7B, COX7C, COX8 and NDUFA4, which are encoded in the nuclear genome. The complex exists as a monomer or a dimer and forms supercomplexes (SCs) in the inner mitochondrial membrane with NADH-ubiquinone oxidoreductase (complex I, CI) and ubiquinol-cytochrome c oxidoreductase (cytochrome b-c1 complex, complex III, CIII), resulting in different assemblies (supercomplex SCI(1)III(2)IV(1) and megacomplex MCI(2)III(2)IV(2)). Interacts with AFG1L. Interacts with RAB5IF. Post-translationally, in response to mitochondrial stress, the precursor protein is ubiquitinated by the SIFI complex in the cytoplasm before mitochondrial import, leading to its degradation. Within the SIFI complex, UBR4 initiates ubiquitin chain that are further elongated or branched by KCMF1.

The protein resides in the mitochondrion inner membrane. Its pathway is energy metabolism; oxidative phosphorylation. Functionally, component of the cytochrome c oxidase, the last enzyme in the mitochondrial electron transport chain which drives oxidative phosphorylation. The respiratory chain contains 3 multisubunit complexes succinate dehydrogenase (complex II, CII), ubiquinol-cytochrome c oxidoreductase (cytochrome b-c1 complex, complex III, CIII) and cytochrome c oxidase (complex IV, CIV), that cooperate to transfer electrons derived from NADH and succinate to molecular oxygen, creating an electrochemical gradient over the inner membrane that drives transmembrane transport and the ATP synthase. Cytochrome c oxidase is the component of the respiratory chain that catalyzes the reduction of oxygen to water. Electrons originating from reduced cytochrome c in the intermembrane space (IMS) are transferred via the dinuclear copper A center (CU(A)) of subunit 2 and heme A of subunit 1 to the active site in subunit 1, a binuclear center (BNC) formed by heme A3 and copper B (CU(B)). The BNC reduces molecular oxygen to 2 water molecules using 4 electrons from cytochrome c in the IMS and 4 protons from the mitochondrial matrix. In Symphalangus syndactylus (Siamang), this protein is Cytochrome c oxidase subunit 5A, mitochondrial (COX5A).